The chain runs to 194 residues: NADH-quinone oxidoreductase subunit B 1 (194 aa).

Residues cysteine 73, cysteine 74, cysteine 138, and cysteine 168 each contribute to the [4Fe-4S] cluster site.

Belongs to the complex I 20 kDa subunit family. As to quaternary structure, NDH-1 is composed of 14 different subunits. Subunits NuoB, C, D, E, F, and G constitute the peripheral sector of the complex. The cofactor is [4Fe-4S] cluster.

Its subcellular location is the cell inner membrane. It carries out the reaction a quinone + NADH + 5 H(+)(in) = a quinol + NAD(+) + 4 H(+)(out). NDH-1 shuttles electrons from NADH, via FMN and iron-sulfur (Fe-S) centers, to quinones in the respiratory chain. The immediate electron acceptor for the enzyme in this species is believed to be ubiquinone. Couples the redox reaction to proton translocation (for every two electrons transferred, four hydrogen ions are translocated across the cytoplasmic membrane), and thus conserves the redox energy in a proton gradient. The chain is NADH-quinone oxidoreductase subunit B 1 from Rhizobium etli (strain CIAT 652).